The following is a 297-amino-acid chain: Nucleotide-binding protein Bphy_0322 (297 aa).

Position 8–15 (8–15 (GISGSGKS)) interacts with ATP. 57-60 (DARS) contacts GTP.

This sequence belongs to the RapZ-like family.

Functionally, displays ATPase and GTPase activities. The protein is Nucleotide-binding protein Bphy_0322 of Paraburkholderia phymatum (strain DSM 17167 / CIP 108236 / LMG 21445 / STM815) (Burkholderia phymatum).